Consider the following 965-residue polypeptide: Valine--tRNA ligase (965 aa).

Residues 1–12 (MEKTPATQTQAE) are compositionally biased toward polar residues. Residues 1 to 23 (MEKTPATQTQAEPSLDKTYNPKE) form a disordered region. Residues 56–66 (PNVTGSLHMGH) carry the 'HIGH' region motif. A 'KMSKS' region motif is present at residues 568–572 (KMSKS). Residue Lys571 participates in ATP binding. Residues 893 to 960 (MAGLVDKEAE…SKEKLLAQKE (68 aa)) are a coiled coil.

Belongs to the class-I aminoacyl-tRNA synthetase family. ValS type 1 subfamily. In terms of assembly, monomer.

Its subcellular location is the cytoplasm. It carries out the reaction tRNA(Val) + L-valine + ATP = L-valyl-tRNA(Val) + AMP + diphosphate. Its function is as follows. Catalyzes the attachment of valine to tRNA(Val). As ValRS can inadvertently accommodate and process structurally similar amino acids such as threonine, to avoid such errors, it has a 'posttransfer' editing activity that hydrolyzes mischarged Thr-tRNA(Val) in a tRNA-dependent manner. This chain is Valine--tRNA ligase, found in Photorhabdus laumondii subsp. laumondii (strain DSM 15139 / CIP 105565 / TT01) (Photorhabdus luminescens subsp. laumondii).